The following is a 78-amino-acid chain: Acyl carrier protein (78 aa).

The Carrier domain occupies 2-77; sequence SDIEQRVKQA…SAIDYVTKKL (76 aa). O-(pantetheine 4'-phosphoryl)serine is present on S37.

This sequence belongs to the acyl carrier protein (ACP) family. 4'-phosphopantetheine is transferred from CoA to a specific serine of apo-ACP by AcpS. This modification is essential for activity because fatty acids are bound in thioester linkage to the sulfhydryl of the prosthetic group.

Its subcellular location is the cytoplasm. It functions in the pathway lipid metabolism; fatty acid biosynthesis. Its function is as follows. Carrier of the growing fatty acid chain in fatty acid biosynthesis. This chain is Acyl carrier protein, found in Acinetobacter baylyi (strain ATCC 33305 / BD413 / ADP1).